Consider the following 160-residue polypeptide: Ribosomal RNA large subunit methyltransferase H (160 aa).

S-adenosyl-L-methionine contacts are provided by residues L76, G108, and 127 to 132; that span reads FGFMTW.

This sequence belongs to the RNA methyltransferase RlmH family. Homodimer.

The protein resides in the cytoplasm. The enzyme catalyses pseudouridine(1915) in 23S rRNA + S-adenosyl-L-methionine = N(3)-methylpseudouridine(1915) in 23S rRNA + S-adenosyl-L-homocysteine + H(+). Specifically methylates the pseudouridine at position 1915 (m3Psi1915) in 23S rRNA. The polypeptide is Ribosomal RNA large subunit methyltransferase H (Bartonella tribocorum (strain CIP 105476 / IBS 506)).